The sequence spans 199 residues: Adenylyl-sulfate kinase (199 aa).

The segment at 1–22 (MSESNHITWHDSEVTKKQRQHK) is disordered. 34–41 (GLSGSGKS) lines the ATP pocket. The active-site Phosphoserine intermediate is the Ser108.

This sequence belongs to the APS kinase family.

It catalyses the reaction adenosine 5'-phosphosulfate + ATP = 3'-phosphoadenylyl sulfate + ADP + H(+). It participates in sulfur metabolism; hydrogen sulfide biosynthesis; sulfite from sulfate: step 2/3. Its function is as follows. Catalyzes the synthesis of activated sulfate. The protein is Adenylyl-sulfate kinase of Staphylococcus epidermidis (strain ATCC 12228 / FDA PCI 1200).